Reading from the N-terminus, the 202-residue chain is Probable septum site-determining protein MinC (202 aa).

It belongs to the MinC family. In terms of assembly, interacts with MinD and FtsZ.

In terms of biological role, cell division inhibitor that blocks the formation of polar Z ring septums. Rapidly oscillates between the poles of the cell to destabilize FtsZ filaments that have formed before they mature into polar Z rings. Prevents FtsZ polymerization. In Sulfurihydrogenibium sp. (strain YO3AOP1), this protein is Probable septum site-determining protein MinC.